The chain runs to 298 residues: Lipoyl synthase (298 aa).

[4Fe-4S] cluster contacts are provided by Cys40, Cys45, Cys51, Cys67, Cys71, Cys74, and Ser280. One can recognise a Radical SAM core domain in the interval 53–269; the sequence is AVRKTATFMI…KEIALSKGFS (217 aa).

The protein belongs to the radical SAM superfamily. Lipoyl synthase family. Requires [4Fe-4S] cluster as cofactor.

The protein localises to the cytoplasm. The enzyme catalyses [[Fe-S] cluster scaffold protein carrying a second [4Fe-4S](2+) cluster] + N(6)-octanoyl-L-lysyl-[protein] + 2 oxidized [2Fe-2S]-[ferredoxin] + 2 S-adenosyl-L-methionine + 4 H(+) = [[Fe-S] cluster scaffold protein] + N(6)-[(R)-dihydrolipoyl]-L-lysyl-[protein] + 4 Fe(3+) + 2 hydrogen sulfide + 2 5'-deoxyadenosine + 2 L-methionine + 2 reduced [2Fe-2S]-[ferredoxin]. It functions in the pathway protein modification; protein lipoylation via endogenous pathway; protein N(6)-(lipoyl)lysine from octanoyl-[acyl-carrier-protein]. Functionally, catalyzes the radical-mediated insertion of two sulfur atoms into the C-6 and C-8 positions of the octanoyl moiety bound to the lipoyl domains of lipoate-dependent enzymes, thereby converting the octanoylated domains into lipoylated derivatives. This chain is Lipoyl synthase, found in Bacillus cereus (strain ATCC 10987 / NRS 248).